Here is a 496-residue protein sequence, read N- to C-terminus: Glycerol kinase (496 aa).

Thr-12 contacts ADP. 3 residues coordinate ATP: Thr-12, Thr-13, and Ser-14. Thr-12 is a sn-glycerol 3-phosphate binding site. Arg-16 serves as a coordination point for ADP. The sn-glycerol 3-phosphate site is built by Arg-82, Glu-83, and Tyr-134. 3 residues coordinate glycerol: Arg-82, Glu-83, and Tyr-134. At His-230 the chain carries Phosphohistidine; by HPr. A sn-glycerol 3-phosphate-binding site is contributed by Asp-244. Glycerol is bound by residues Asp-244 and Gln-245. ADP is bound by residues Thr-266 and Gly-309. Thr-266, Gly-309, Gln-313, and Gly-410 together coordinate ATP. ADP-binding residues include Gly-410 and Asn-414.

Belongs to the FGGY kinase family. In terms of assembly, homotetramer and homodimer (in equilibrium). In terms of processing, the phosphoenolpyruvate-dependent sugar phosphotransferase system (PTS), including enzyme I, and histidine-containing protein (HPr) are required for the phosphorylation, which leads to the activation of the enzyme.

The catalysed reaction is glycerol + ATP = sn-glycerol 3-phosphate + ADP + H(+). Its pathway is polyol metabolism; glycerol degradation via glycerol kinase pathway; sn-glycerol 3-phosphate from glycerol: step 1/1. With respect to regulation, activated by phosphorylation and inhibited by fructose 1,6-bisphosphate (FBP). Key enzyme in the regulation of glycerol uptake and metabolism. Catalyzes the phosphorylation of glycerol to yield sn-glycerol 3-phosphate. The chain is Glycerol kinase from Bacillus velezensis (strain DSM 23117 / BGSC 10A6 / LMG 26770 / FZB42) (Bacillus amyloliquefaciens subsp. plantarum).